The chain runs to 66 residues: Cold shock protein CspD (66 aa).

Positions 4-63 (GKVKWFNNEKGFGFIEVEGGDDVFVHFTAIEGDGYKSLEEGQEVSFEIVEGNRGPQASNV) constitute a CSD domain.

Its subcellular location is the cytoplasm. The protein is Cold shock protein CspD (cspD) of Bacillus subtilis (strain 168).